A 251-amino-acid polypeptide reads, in one-letter code: Flap endonuclease Xni (251 aa).

Position 104 (aspartate 104) interacts with Mg(2+). The 5'-3' exonuclease domain maps to 160 to 248 (VSPQQLSDYW…ALTGNLQQLR (89 aa)). 5 residues coordinate K(+): leucine 171, alanine 172, proline 180, valine 182, and isoleucine 185. The tract at residues 184 to 189 (GIGPKT) is interaction with DNA.

This sequence belongs to the Xni family. It depends on Mg(2+) as a cofactor. Requires K(+) as cofactor.

In terms of biological role, has flap endonuclease activity. During DNA replication, flap endonucleases cleave the 5'-overhanging flap structure that is generated by displacement synthesis when DNA polymerase encounters the 5'-end of a downstream Okazaki fragment. The polypeptide is Flap endonuclease Xni (Serratia proteamaculans (strain 568)).